We begin with the raw amino-acid sequence, 142 residues long: Transcriptional regulator MraZ (142 aa).

2 consecutive SpoVT-AbrB domains span residues 5 to 47 and 76 to 119; these read EFQH…PQHE and ATEC…SKEE.

This sequence belongs to the MraZ family. In terms of assembly, forms oligomers.

The protein localises to the cytoplasm. It is found in the nucleoid. The polypeptide is Transcriptional regulator MraZ (Desulforamulus reducens (strain ATCC BAA-1160 / DSM 100696 / MI-1) (Desulfotomaculum reducens)).